Consider the following 202-residue polypeptide: Small ribosomal subunit protein uS4 (202 aa).

A disordered region spans residues 18–42 (LPGLTRKAAKRSYPPGQHGQARRKR). Residues 90 to 152 (NRLDNVCFRL…KPSKKLAETN (63 aa)) enclose the S4 RNA-binding domain.

The protein belongs to the universal ribosomal protein uS4 family. In terms of assembly, part of the 30S ribosomal subunit. Contacts protein S5. The interaction surface between S4 and S5 is involved in control of translational fidelity.

Its function is as follows. One of the primary rRNA binding proteins, it binds directly to 16S rRNA where it nucleates assembly of the body of the 30S subunit. In terms of biological role, with S5 and S12 plays an important role in translational accuracy. The sequence is that of Small ribosomal subunit protein uS4 from Synechococcus sp. (strain RCC307).